The primary structure comprises 806 residues: MDFINIEKKWQEFWWKNKSFEPKDDFNLPKKYILSMLPYPSGEIHMGHVRNYTIGDALARYYRLHHYNVLHPMGFDSFGMPAENAAIKHGIHPKTWTYENIEAMQKEFEALGFSFSKNREFATSDPDYTKFEQQFFIDLWEKGLIYRKKAMLNWCPNDKTVLANEQVIDGRCWRCDTEVIQKELYQYYLKITNYAEELLKDLETLENHWPSQVLTMQKNWIGKSSGLQFGFKIADECLKACNNIQEIEVFTTRADTIYGVTYIAIAPEHPLVEHAIKRVSQEDSKMIKAILNTTQRERALEKKGAFLGIYAIHPLTKQKIPVWVANFALANYGSGALMGVPACDERDFEFANLYHIPIKVITQSPQNLPHTKEEILKNSGEWSDLSSSVAREKIIAYFEKENLGKRVINYRLQDWGVSRQRYWGAPIPMIHCKHCGIVPETQLPVTLPEDIVIDGEGNPLEKHASWKFAQCPKCHKDALRETDTMDTFIQSSWYFLRYTTPKNQRENQAFDQNYLKYFMPVDTYIGGIEHAILHLLYARFFTKALRDLGYLHLDEPFKQLITQGMVLKDGAKMSKSKGNVVSPKEILKKYGADAVRLFILFAAPPAKELEWNDNALEGAHRFIKRLYDKANAITPTTSKPEFKEVGLNEAQKLARKKVYEALKKSHEIFNKAESAYAFNTLIASCMEALNALNAQSDEQILCEGYFVLLQILEPMIPHTAWELSERLFKRENFKPIEVDESALIEDFMTLGLTINGKRRAELKVNINASKEEIIILAKKELEKYLENASVKKEIYVPNKLVNFVTA.

The 'HIGH' region signature appears at 38–48 (PYPSGEIHMGH). The short motif at 572 to 576 (KMSKS) is the 'KMSKS' region element. K575 is an ATP binding site.

The protein belongs to the class-I aminoacyl-tRNA synthetase family.

Its subcellular location is the cytoplasm. The catalysed reaction is tRNA(Leu) + L-leucine + ATP = L-leucyl-tRNA(Leu) + AMP + diphosphate. The chain is Leucine--tRNA ligase from Helicobacter pylori (strain J99 / ATCC 700824) (Campylobacter pylori J99).